The chain runs to 110 residues: Iron-sulfur cluster assembly protein CyaY (110 aa).

The protein belongs to the frataxin family.

In terms of biological role, involved in iron-sulfur (Fe-S) cluster assembly. May act as a regulator of Fe-S biogenesis. This is Iron-sulfur cluster assembly protein CyaY from Variovorax paradoxus (strain S110).